Here is a 424-residue protein sequence, read N- to C-terminus: Insertion element IS2A uncharacterized 48.2 kDa protein (424 aa).

The 184-residue stretch at 229 to 412 (KPAVPPSKRA…SPREYLRHGA (184 aa)) folds into the Integrase catalytic domain.

Belongs to the transposase 8 family.

This chain is Insertion element IS2A uncharacterized 48.2 kDa protein, found in Escherichia coli.